The chain runs to 562 residues: NAD-dependent malic enzyme (562 aa).

Y101 functions as the Proton donor in the catalytic mechanism. R154 serves as a coordination point for NAD(+). The active-site Proton acceptor is the K172. A divalent metal cation-binding residues include E243, D244, and D267. 2 residues coordinate NAD(+): D267 and N415.

This sequence belongs to the malic enzymes family. In terms of assembly, homotetramer. It depends on Mg(2+) as a cofactor. Mn(2+) serves as cofactor.

It catalyses the reaction (S)-malate + NAD(+) = pyruvate + CO2 + NADH. It carries out the reaction oxaloacetate + H(+) = pyruvate + CO2. This is NAD-dependent malic enzyme from Shewanella baltica (strain OS223).